The primary structure comprises 296 residues: Ribosomal protein L11 methyltransferase (296 aa).

Positions 145, 166, 188, and 230 each coordinate S-adenosyl-L-methionine.

Belongs to the methyltransferase superfamily. PrmA family.

The protein resides in the cytoplasm. The catalysed reaction is L-lysyl-[protein] + 3 S-adenosyl-L-methionine = N(6),N(6),N(6)-trimethyl-L-lysyl-[protein] + 3 S-adenosyl-L-homocysteine + 3 H(+). Its function is as follows. Methylates ribosomal protein L11. This chain is Ribosomal protein L11 methyltransferase, found in Photorhabdus laumondii subsp. laumondii (strain DSM 15139 / CIP 105565 / TT01) (Photorhabdus luminescens subsp. laumondii).